We begin with the raw amino-acid sequence, 207 residues long: Guanylate kinase (207 aa).

Positions 4–184 (GTLYIVSAPS…ALMDFKAIIR (181 aa)) constitute a Guanylate kinase-like domain. 11–18 (APSGAGKS) serves as a coordination point for ATP.

It belongs to the guanylate kinase family.

The protein resides in the cytoplasm. The enzyme catalyses GMP + ATP = GDP + ADP. It catalyses the reaction dZMP + ATP = dZDP + ADP. It participates in purine metabolism. In terms of biological role, essential for recycling GMP and indirectly, cGMP. Its function is as follows. (Microbial infection) Catalyzes the phosphorylation of dZMP to dZDP, when the bacterium is infected by a phage that produces the substrate for the synthesis of dZTP (2- amino-2'-deoxyadenosine 5'-triphosphate), which is then used by the phage as a DNA polymerase substrate. This chain is Guanylate kinase (gmk), found in Vibrio cholerae serotype O1 (strain ATCC 39315 / El Tor Inaba N16961).